The primary structure comprises 456 residues: IQ domain-containing protein IQM3 (456 aa).

Positions 46-75 (TRLAAVKVQKVYRSYRTRRRLADSVVVAEE) constitute an IQ domain. The disordered stretch occupies residues 315–358 (SEDSDSYDDYVKSNGGSEPEPLKKEDTTFQAETETDENGNGTVG).

In terms of tissue distribution, expressed in roots, rosette and cauline leaves, flowers and siliques, and at lower levels in stems.

Its subcellular location is the cytoplasm. The protein localises to the nucleus. Functionally, may be involved in biotic and abiotic stress responses. This chain is IQ domain-containing protein IQM3, found in Arabidopsis thaliana (Mouse-ear cress).